The sequence spans 250 residues: 26 kDa periplasmic immunogenic protein (250 aa).

Positions methionine 1–alanine 28 are cleaved as a signal peptide.

The protein localises to the periplasm. This Brucella melitensis biotype 1 (strain ATCC 23456 / CCUG 17765 / NCTC 10094 / 16M) protein is 26 kDa periplasmic immunogenic protein (bp26).